The sequence spans 558 residues: Arginine--tRNA ligase (558 aa).

The 'HIGH' region signature appears at 116–126 (ANPNGPLHVGH).

It belongs to the class-I aminoacyl-tRNA synthetase family.

It is found in the cytoplasm. It carries out the reaction tRNA(Arg) + L-arginine + ATP = L-arginyl-tRNA(Arg) + AMP + diphosphate. This is Arginine--tRNA ligase from Methanocorpusculum labreanum (strain ATCC 43576 / DSM 4855 / Z).